The primary structure comprises 105 residues: Met repressor (105 aa).

Belongs to the MetJ family. As to quaternary structure, homodimer.

It is found in the cytoplasm. Its function is as follows. This regulatory protein, when combined with SAM (S-adenosylmethionine) represses the expression of the methionine regulon and of enzymes involved in SAM synthesis. This chain is Met repressor, found in Proteus mirabilis (strain HI4320).